The primary structure comprises 336 residues: UDP-N-acetylenolpyruvoylglucosamine reductase (336 aa).

Residues 17-188 (GFDVRARYAS…TAVTLRLSRD (172 aa)) form the FAD-binding PCMH-type domain. The active site involves Arg-164. Ser-236 functions as the Proton donor in the catalytic mechanism. Glu-332 is a catalytic residue.

It belongs to the MurB family. It depends on FAD as a cofactor.

The protein localises to the cytoplasm. The enzyme catalyses UDP-N-acetyl-alpha-D-muramate + NADP(+) = UDP-N-acetyl-3-O-(1-carboxyvinyl)-alpha-D-glucosamine + NADPH + H(+). Its pathway is cell wall biogenesis; peptidoglycan biosynthesis. In terms of biological role, cell wall formation. This chain is UDP-N-acetylenolpyruvoylglucosamine reductase, found in Cupriavidus pinatubonensis (strain JMP 134 / LMG 1197) (Cupriavidus necator (strain JMP 134)).